The sequence spans 346 residues: Transcription termination factor 4, mitochondrial (346 aa).

The N-terminal 42 residues, 1–42 (MASLGRQVPEWHRLLALSWACLVRQTPHLREQKQMSPSLSCK), are a transit peptide targeting the mitochondrion. MTERF repeat units follow at residues 142–172 (FNAL…LGLG), 177–204 (KRVL…LREK), 209–239 (AQHI…YAYF), 245–270 (HLDI…YLER), and 290–318 (LRNI…VFKK). A dimerization with NSUN4 region spans residues 310–327 (VEEFQVFKKLLDQEEEEE). A disordered region spans residues 321–346 (DQEEEEESESHASEEEEEEEEEEELL). A compositionally biased stretch (acidic residues) spans 322-346 (QEEEEESESHASEEEEEEEEEEELL).

The protein belongs to the mTERF family. In terms of assembly, heterodimer with NSUN4; this interaction may be required for NSUN4 recruitment to the mitochondrial large ribosomal subunit. In terms of tissue distribution, widely expressed, with highest levels in liver, followed by testis, kidney and brain.

It localises to the mitochondrion. Functionally, regulator of mitochondrial ribosome biogenesis and translation. Binds to mitochondrial ribosomal RNAs 16S, 12S and 7S. Targets NSUN4 RNA methyltransferase to the mitochondrial large ribosomal subunit. This Mus musculus (Mouse) protein is Transcription termination factor 4, mitochondrial (Mterf4).